We begin with the raw amino-acid sequence, 178 residues long: Prion-like protein doppel (178 aa).

The first 25 residues, 1–25, serve as a signal peptide directing secretion; sequence MRKHLGGCWLAIVCVLLFSQLSSVK. The flexible tail stretch occupies residues 27-50; that stretch reads RGIKHRIKWNRKVLPSTSQVTEAH. Residues 51–154 form a globular region; that stretch reads TAEIRPGAFI…KHCDFWLERG (104 aa). Cystine bridges form between Cys94–Cys147 and Cys108–Cys142. Residues Asn98 and Asn110 are each glycosylated (N-linked (GlcNAc...) asparagine). Residues 124 to 141 form a cu(2+) binding region; the sequence is KQDNKLYQRVLWQLIREL. A lipid anchor (GPI-anchor amidated glycine) is attached at Gly154. Residues 155-178 constitute a propeptide, removed in mature form; that stretch reads AGLQVTLDQPMMLCLLVFIWFIVK.

This sequence belongs to the prion family. In terms of processing, N-glycosylated. Post-translationally, O-glycosylated. Strongly expressed in testis. Detected at low levels in lymph node, spleen and ovary.

It localises to the cell membrane. Required for normal acrosome reaction and for normal male fertility. Can bind Cu(2+). This Ovis aries (Sheep) protein is Prion-like protein doppel (PRND).